Reading from the N-terminus, the 273-residue chain is Dormancy associated translation inhibitor (273 aa).

As to quaternary structure, interacts with human TLR2.

Functionally, involved in translation regulation. Can also stimulate macrophages and peripheral blood mononuclear cells (PBMC) to secrete important cytokines that may be significant in granuloma formation and its maintenance. Increases secretion of IFN-gamma, TNF-alpha, IL-1 beta and IL-8 through human Toll-like receptor 2 (TLR2) signaling pathway. This is Dormancy associated translation inhibitor from Mycobacterium tuberculosis (strain CDC 1551 / Oshkosh).